The chain runs to 59 residues: Membrane-associated ATPase epsilon chain (59 aa).

It to E.hirae NtpH. As to quaternary structure, sul-ATPase is composed of six (or maybe five) subunits: alpha, beta, delta, gamma, C (proteolipid), and possibly epsilon.

It carries out the reaction ATP + H2O + 4 H(+)(in) = ADP + phosphate + 5 H(+)(out). The sequence is that of Membrane-associated ATPase epsilon chain (atpE) from Sulfurisphaera tokodaii (strain DSM 16993 / JCM 10545 / NBRC 100140 / 7) (Sulfolobus tokodaii).